Here is a 563-residue protein sequence, read N- to C-terminus: Putative cysteine ligase BshC (563 aa).

The protein belongs to the BshC family.

This chain is Putative cysteine ligase BshC, found in Chlorobium phaeobacteroides (strain BS1).